Reading from the N-terminus, the 1573-residue chain is Mediator of RNA polymerase II transcription subunit 1 (1573 aa).

Positions L588–L592 match the LXXLL motif 1 motif. Disordered stretches follow at residues T595–F691, S774–F883, and L928–D1564. Residues P606–S617 are compositionally biased toward pro residues. The short motif at L629–L633 is the LXXLL motif 2 element. Positions E651 to S668 are enriched in polar residues. The span at T678–F691 shows a compositional bias: basic and acidic residues. Polar residues-rich tracts occupy residues R791 to F804, G835 to F864, and Q934 to L944. The span at L949–E961 shows a compositional bias: basic and acidic residues. A compositionally biased stretch (gly residues) spans G963–S973. 5 stretches are compositionally biased toward low complexity: residues P1025–G1038, K1053–S1085, S1092–G1116, S1124–K1143, and S1155–S1164. The segment covering M1176–S1193 has biased composition (polar residues). The segment covering L1226 to S1277 has biased composition (low complexity). Positions G1278 to K1290 are enriched in polar residues. The span at P1350–K1362 shows a compositional bias: basic and acidic residues. Composition is skewed to polar residues over residues S1420–T1435 and P1443–D1457. Residues E1461 to S1471 show a composition bias toward low complexity. Over residues K1496–K1505 the composition is skewed to basic residues. A compositionally biased stretch (basic and acidic residues) spans R1506 to K1518.

The protein belongs to the Mediator complex subunit 1 family. As to quaternary structure, component of the Mediator complex.

It is found in the nucleus. Its function is as follows. Component of the Mediator complex, a coactivator involved in the regulated transcription of nearly all RNA polymerase II-dependent genes. Mediator functions as a bridge to convey information from gene-specific regulatory proteins to the basal RNA polymerase II transcription machinery. Mediator is recruited to promoters by direct interactions with regulatory proteins and serves as a scaffold for the assembly of a functional preinitiation complex with RNA polymerase II and the general transcription factors. In Xenopus tropicalis (Western clawed frog), this protein is Mediator of RNA polymerase II transcription subunit 1 (med1).